The following is a 455-amino-acid chain: Serine--tRNA ligase (455 aa).

252–254 is an L-serine binding site; the sequence is TAE. Residues 283–285 and V299 each bind ATP; that span reads RKE. E306 contacts L-serine. 370-373 lines the ATP pocket; the sequence is EVVS. T406 provides a ligand contact to L-serine.

It belongs to the class-II aminoacyl-tRNA synthetase family. Type-1 seryl-tRNA synthetase subfamily. In terms of assembly, homodimer. The tRNA molecule binds across the dimer.

Its subcellular location is the cytoplasm. It carries out the reaction tRNA(Ser) + L-serine + ATP = L-seryl-tRNA(Ser) + AMP + diphosphate + H(+). It catalyses the reaction tRNA(Sec) + L-serine + ATP = L-seryl-tRNA(Sec) + AMP + diphosphate + H(+). It participates in aminoacyl-tRNA biosynthesis; selenocysteinyl-tRNA(Sec) biosynthesis; L-seryl-tRNA(Sec) from L-serine and tRNA(Sec): step 1/1. In terms of biological role, catalyzes the attachment of serine to tRNA(Ser). Is also able to aminoacylate tRNA(Sec) with serine, to form the misacylated tRNA L-seryl-tRNA(Sec), which will be further converted into selenocysteinyl-tRNA(Sec). The sequence is that of Serine--tRNA ligase from Pyrococcus abyssi (strain GE5 / Orsay).